A 198-amino-acid polypeptide reads, in one-letter code: Chorion protein S19 (198 aa).

The first 16 residues, 1–16, serve as a signal peptide directing secretion; sequence MNKFATLAVFISVCLA.

Belongs to the chorion protein S19 family.

It localises to the secreted. In terms of biological role, chorion membrane (egg shell) protein; plays a role in protecting the egg from the environment. This chain is Chorion protein S19 (Cp19), found in Drosophila virilis (Fruit fly).